The primary structure comprises 406 residues: F-box/WD repeat-containing protein mec-15 (406 aa).

An F-box domain is found at 6-53 (PTELISLPSELLCHLFTYLPQRQLITEIPLVCRRFNTILNDDKFWSRR). WD repeat units follow at residues 101 to 142 (GHSA…NGED), 156 to 195 (AHSG…ALQN), 242 to 279 (LHKR…KPVL), 281 to 320 (EYSP…VLQT), and 365 to 406 (SHEL…DQEN).

In terms of assembly, may interact with the SCF ubiquitin ligase complex component skr-1. Expressed in several neurons in the head, tail and ventral cord, but absent in touch receptor neurons in adults. Expressed in GABAergic and cholinergic motor neurons.

The protein localises to the perikaryon. Functionally, plays a role in mechanosensory transduction (touch sensitivity), touch receptor neuron development and synapse formation. Regulates expression of the protein snb-1 and the distribution of synaptic vesicles at synapses to promote synaptic transmission at the neuromuscular junctions of GABAergic motor neurons. The chain is F-box/WD repeat-containing protein mec-15 from Caenorhabditis elegans.